A 460-amino-acid chain; its full sequence is Bifunctional protein GlmU (460 aa).

The interval 1 to 232 (MALNVVILAA…AIEVEGANNR (232 aa)) is pyrophosphorylase. Residues 8–11 (LAAG), Lys22, Gln73, 78–79 (GT), 100–102 (YGD), Gly137, Glu157, Asn172, and Asn230 contribute to the UDP-N-acetyl-alpha-D-glucosamine site. Asp102 lines the Mg(2+) pocket. Asn230 lines the Mg(2+) pocket. A linker region spans residues 233–253 (VQLAQLERAYQAREAEKLMLA). Residues 254–460 (GANLRDPSRI…GWQRPVKIKK (207 aa)) form an N-acetyltransferase region. Residues Arg336 and Lys354 each contribute to the UDP-N-acetyl-alpha-D-glucosamine site. His366 (proton acceptor) is an active-site residue. UDP-N-acetyl-alpha-D-glucosamine contacts are provided by Tyr369 and Asn380. Residues Ala383, 389 to 390 (NY), Ser408, Ala426, and Arg443 contribute to the acetyl-CoA site.

It in the N-terminal section; belongs to the N-acetylglucosamine-1-phosphate uridyltransferase family. This sequence in the C-terminal section; belongs to the transferase hexapeptide repeat family. Homotrimer. It depends on Mg(2+) as a cofactor.

The protein localises to the cytoplasm. The catalysed reaction is alpha-D-glucosamine 1-phosphate + acetyl-CoA = N-acetyl-alpha-D-glucosamine 1-phosphate + CoA + H(+). The enzyme catalyses N-acetyl-alpha-D-glucosamine 1-phosphate + UTP + H(+) = UDP-N-acetyl-alpha-D-glucosamine + diphosphate. The protein operates within nucleotide-sugar biosynthesis; UDP-N-acetyl-alpha-D-glucosamine biosynthesis; N-acetyl-alpha-D-glucosamine 1-phosphate from alpha-D-glucosamine 6-phosphate (route II): step 2/2. It functions in the pathway nucleotide-sugar biosynthesis; UDP-N-acetyl-alpha-D-glucosamine biosynthesis; UDP-N-acetyl-alpha-D-glucosamine from N-acetyl-alpha-D-glucosamine 1-phosphate: step 1/1. It participates in bacterial outer membrane biogenesis; LPS lipid A biosynthesis. Catalyzes the last two sequential reactions in the de novo biosynthetic pathway for UDP-N-acetylglucosamine (UDP-GlcNAc). The C-terminal domain catalyzes the transfer of acetyl group from acetyl coenzyme A to glucosamine-1-phosphate (GlcN-1-P) to produce N-acetylglucosamine-1-phosphate (GlcNAc-1-P), which is converted into UDP-GlcNAc by the transfer of uridine 5-monophosphate (from uridine 5-triphosphate), a reaction catalyzed by the N-terminal domain. This Shewanella baltica (strain OS185) protein is Bifunctional protein GlmU.